We begin with the raw amino-acid sequence, 171 residues long: Protein phosphatase 1 regulatory subunit 1A (171 aa).

Methionine 1 is modified (N-acetylmethionine). Positions 1 to 171 are disordered; it reads MEPDNSPRKI…PLDSQGASLV (171 aa). The tract at residues 9–12 is essential for activity; that stretch reads KIQF. Residues 19–29 are compositionally biased toward basic and acidic residues; that stretch reads PHLDPEAAEQI. Threonine 35 bears the Phosphothreonine mark. Residues 42–54 are essential for activity; the sequence is TSDQSSPEIDEDR. 4 positions are modified to phosphoserine: serine 43, serine 46, serine 47, and serine 67. Residues 122–146 show a composition bias toward polar residues; it reads GSASRPDTPGTAQKSAESNPKTQEQ. The interval 143–171 is interaction with PPP1R15A; sequence TQEQCGVEPRTEDSSAHMLPLDSQGASLV.

Belongs to the protein phosphatase inhibitor 1 family. As to quaternary structure, interacts with PPP1R15A. Phosphorylation of Thr-35 is required for activity.

Inhibitor of protein-phosphatase 1. This protein may be important in hormonal control of glycogen metabolism. Hormones that elevate intracellular cAMP increase I-1 activity in many tissues. I-1 activation may impose cAMP control over proteins that are not directly phosphorylated by PKA. Following a rise in intracellular calcium, I-1 is inactivated by calcineurin (or PP2B). Does not inhibit type-2 phosphatases. The sequence is that of Protein phosphatase 1 regulatory subunit 1A (Ppp1r1a) from Mus musculus (Mouse).